A 123-amino-acid polypeptide reads, in one-letter code: Small ribosomal subunit protein uS12 (123 aa).

The interval 11–32 (PRQEKTYREKARHLGASPQKRG) is disordered. The residue at position 89 (Asp89) is a 3-methylthioaspartic acid.

This sequence belongs to the universal ribosomal protein uS12 family. In terms of assembly, part of the 30S ribosomal subunit. Contacts proteins S8 and S17. May interact with IF1 in the 30S initiation complex.

Functionally, with S4 and S5 plays an important role in translational accuracy. Interacts with and stabilizes bases of the 16S rRNA that are involved in tRNA selection in the A site and with the mRNA backbone. Located at the interface of the 30S and 50S subunits, it traverses the body of the 30S subunit contacting proteins on the other side and probably holding the rRNA structure together. The combined cluster of proteins S8, S12 and S17 appears to hold together the shoulder and platform of the 30S subunit. This Methylocella silvestris (strain DSM 15510 / CIP 108128 / LMG 27833 / NCIMB 13906 / BL2) protein is Small ribosomal subunit protein uS12.